A 515-amino-acid chain; its full sequence is Zinc-binding protein AdcA (515 aa).

The first 28 residues, 1 to 28 (MKKKILLMMSLISVFFAWQLTQAKQVLA), serve as a signal peptide directing secretion. Histidine 66 contributes to the Zn(2+) binding site. Positions 125-148 (DHHHEDADKKHEHNKHSEEGHNHA) are disordered. Positions 129–148 (EDADKKHEHNKHSEEGHNHA) are his-rich loop. Histidine 152, histidine 216, and glutamate 291 together coordinate Zn(2+).

It belongs to the bacterial solute-binding protein 9 family.

Functionally, part of the ATP-binding cassette (ABC) transport system AdcABC involved in zinc import. Binds zinc with high affinity and specificity and delivers it to the membrane permease for translocation into the cytoplasm. In Streptococcus pyogenes serotype M18 (strain MGAS8232), this protein is Zinc-binding protein AdcA (adcA).